The primary structure comprises 343 residues: MTLNSLPIFLVLISGIFCQYDYGPADDYGYDPFGPSTAVCAPECNCPLSYPTAMYCDNLKLKTIPIVPSGIKYLYLRNNMIESIEENTFDNVTDLQWLILDHNHLENSKIKGRVFSKLKNLKKLHINYNNLTEAVGPLPKTLDDLQLSHNKITKVNPGALEGLVNLTVIHLQNNQLKADSISGAFKGLNSLLYLDLSFNQLTKLPTGLPHSLLMLYFDNNQISNIPDEYFQGFKTLQYLRLSHNKLTDSGIPGNVFNITSLVELDLSFNQLKSIPTVSENLENFYLQVNKINKFPLSSFCKVVGPLTYSKITHLRLDGNNLTRADLPQEMYNCLRVAAEISLE.

A signal peptide spans 1–18; the sequence is MTLNSLPIFLVLISGIFC. Gln19 is modified (pyrrolidone carboxylic acid). Sulfotyrosine is present on residues Tyr20 and Tyr22. The 39-residue stretch at 31–69 folds into the LRRNT domain; that stretch reads DPFGPSTAVCAPECNCPLSYPTAMYCDNLKLKTIPIVPS. LRR repeat units follow at residues 70–91, 94–117, 120–140, 141–162, 165–186, 190–211, 212–232, and 235–255; these read GIKYLYLRNNMIESIEENTFDN, DLQWLILDHNHLENSKIKGRVFSK, NLKKLHINYNNLTEAVGPLPK, TLDDLQLSHNKITKVNPGALEG, NLTVIHLQNNQLKADSISGAFK, SLLYLDLSFNQLTKLPTGLPHS, LLMLYFDNNQISNIPDEYFQG, and TLQYLRLSHNKLTDSGIPGNV. Asn91 is a glycosylation site (N-linked (GlcNAc...) (keratan sulfate) asparagine). Asn130 carries an N-linked (GlcNAc...) (keratan sulfate) asparagine glycan. N-linked (GlcNAc...) (keratan sulfate) asparagine glycosylation occurs at Asn165. Asn257 carries an N-linked (GlcNAc...) (keratan sulfate) asparagine glycan. LRR repeat units lie at residues 260 to 281, 282 to 301, and 310 to 330; these read SLVELDLSFNQLKSIPTVSENL, ENFYLQVNKINKFPLSSFCK, and KITHLRLDGNNLTRADLPQEM. A disulfide bridge connects residues Cys300 and Cys333. Residue Asn320 is glycosylated (N-linked (GlcNAc...) asparagine).

This sequence belongs to the small leucine-rich proteoglycan (SLRP) family. SLRP class II subfamily. In terms of assembly, binds to laminin. Post-translationally, contains keratan sulfate.

The protein localises to the secreted. It is found in the extracellular space. Its subcellular location is the extracellular matrix. The polypeptide is Lumican (LUM) (Coturnix japonica (Japanese quail)).